We begin with the raw amino-acid sequence, 615 residues long: DNA mismatch repair protein MutL (615 aa).

It belongs to the DNA mismatch repair MutL/HexB family.

This protein is involved in the repair of mismatches in DNA. It is required for dam-dependent methyl-directed DNA mismatch repair. May act as a 'molecular matchmaker', a protein that promotes the formation of a stable complex between two or more DNA-binding proteins in an ATP-dependent manner without itself being part of a final effector complex. This is DNA mismatch repair protein MutL from Histophilus somni (strain 2336) (Haemophilus somnus).